A 53-amino-acid polypeptide reads, in one-letter code: IgW transmembrane form Tm1T3/Tm6T3/Tm3C4 (53 aa).

Residues 1–25 (VQAVPPDVKGEEGKEEVEDMDGDDN) are disordered. Residues 13–24 (GKEEVEDMDGDD) show a composition bias toward acidic residues. Residues 29 to 49 (VAAFAILFILSFLYSTFVTVV) traverse the membrane as a helical segment.

As to expression, expressed in the spleen, pancreas, peripheral blood lymphocytes and at low levels in the epigonal organ.

Its subcellular location is the membrane. This is IgW transmembrane form Tm1T3/Tm6T3/Tm3C4 from Ginglymostoma cirratum (Nurse shark).